Here is a 105-residue protein sequence, read N- to C-terminus: UPF0235 protein RF_1332 (105 aa).

Belongs to the UPF0235 family.

The polypeptide is UPF0235 protein RF_1332 (Rickettsia felis (strain ATCC VR-1525 / URRWXCal2) (Rickettsia azadi)).